The following is a 38-amino-acid chain: Beta-defensin 8 (38 aa).

3 disulfide bridges follow: C7–C36, C14–C29, and C19–C37.

This sequence belongs to the beta-defensin family. As to expression, neutrophilic granules.

The protein localises to the secreted. Functionally, has bactericidal activity. Active against E.coli ML35 and S.aureus 502A. This Bos taurus (Bovine) protein is Beta-defensin 8 (DEFB8).